The primary structure comprises 227 residues: Ureidoacrylate amidohydrolase RutB (227 aa).

Asp22 acts as the Proton acceptor in catalysis. Residue Lys131 is part of the active site. Cys164 (nucleophile) is an active-site residue.

It belongs to the isochorismatase family. RutB subfamily.

The enzyme catalyses (Z)-3-ureidoacrylate + H2O + H(+) = (Z)-3-aminoacrylate + NH4(+) + CO2. It carries out the reaction (Z)-3-ureidoacrylate + H2O = (Z)-3-aminoacrylate + carbamate + H(+). It catalyses the reaction (Z)-2-methylureidoacrylate + H2O + H(+) = (Z)-2-methylaminoacrylate + NH4(+) + CO2. Its function is as follows. Hydrolyzes ureidoacrylate to form aminoacrylate and carbamate. The carbamate hydrolyzes spontaneously, thereby releasing one of the nitrogen atoms of the pyrimidine ring as ammonia and one of its carbon atoms as CO2. The sequence is that of Ureidoacrylate amidohydrolase RutB from Azorhizobium caulinodans (strain ATCC 43989 / DSM 5975 / JCM 20966 / LMG 6465 / NBRC 14845 / NCIMB 13405 / ORS 571).